Here is a 504-residue protein sequence, read N- to C-terminus: Maturase K (504 aa).

This sequence belongs to the intron maturase 2 family. MatK subfamily.

Its subcellular location is the plastid. The protein resides in the chloroplast. Usually encoded in the trnK tRNA gene intron. Probably assists in splicing its own and other chloroplast group II introns. This chain is Maturase K, found in Vigna unguiculata (Cowpea).